The chain runs to 421 residues: MLDLKFVRTNPEVVKEALKKRNSNVSLDAFLEQEEERRKLLFEVESLKAQRNTVSEEVGRRKKHGEDAEQLILEMREVGQKVKNLEDKLGEIEQSMEAVLYEIPNIPHESVPVGADEEANVEVRTWGTPRSFDFEPLAHYEIGEKLDILDFARAGKVTGARFTFYKGLGAKLERALISFMLDRHSAKGYVEVLPPYMVHRNSMIGTGQLPKFEEDAFKVAGTDYFLIPTAEVPVTNMYREEILEAEQLPIHHCAYSACFRAEAGSAGRDTRGLIRQHQFNKVELVKFAFPENSYEELESLTRDAESILQELELPYRVMALSTGDLGFTSAKTYDLEVWLPSFNTYREISSCSNFEDFQARRANIRFRRAPKAKPEFLHTLNGSGLAIGRTVSAILENYQEADGRVRVPKALQPYMGVEYIG.

Position 229–231 (229–231) interacts with L-serine; the sequence is TAE. 260-262 lines the ATP pocket; it reads RAE. Residue Glu-283 participates in L-serine binding. An ATP-binding site is contributed by 347–350; sequence EISS. Ser-383 contacts L-serine.

Belongs to the class-II aminoacyl-tRNA synthetase family. Type-1 seryl-tRNA synthetase subfamily. In terms of assembly, homodimer. The tRNA molecule binds across the dimer.

Its subcellular location is the cytoplasm. It catalyses the reaction tRNA(Ser) + L-serine + ATP = L-seryl-tRNA(Ser) + AMP + diphosphate + H(+). The enzyme catalyses tRNA(Sec) + L-serine + ATP = L-seryl-tRNA(Sec) + AMP + diphosphate + H(+). It participates in aminoacyl-tRNA biosynthesis; selenocysteinyl-tRNA(Sec) biosynthesis; L-seryl-tRNA(Sec) from L-serine and tRNA(Sec): step 1/1. In terms of biological role, catalyzes the attachment of serine to tRNA(Ser). Is also able to aminoacylate tRNA(Sec) with serine, to form the misacylated tRNA L-seryl-tRNA(Sec), which will be further converted into selenocysteinyl-tRNA(Sec). This Desulfitobacterium hafniense (strain DSM 10664 / DCB-2) protein is Serine--tRNA ligase.